We begin with the raw amino-acid sequence, 691 residues long: NADPH--cytochrome P450 reductase (691 aa).

Residues 2-7 lie on the Lumenal side of the membrane; that stretch reads PFGIDN. The helical transmembrane segment at 8-24 threads the bilayer; the sequence is TDFTVLAGLVLAVLLYV. The Cytoplasmic portion of the chain corresponds to 25–691; it reads KRNSIKELLM…TSGRYQEDVW (667 aa). The region spanning 61 to 204 is the Flavodoxin-like domain; sequence YLVLYASQTG…DYMAWKDSIL (144 aa). FMN-binding positions include 67–72, lysine 78, 116–119, 152–161, and aspartate 187; these read SQTGTA, STYG, and LGNSTYEFFN. An FAD-binding FR-type domain is found at 266–529; the sequence is SQPYIAPIVK…HVRRSNFRLP (264 aa). Residue arginine 285 participates in NADP(+) binding. FAD-binding positions include 439–442, 457–459, and 476–479; these read RYYS, TSI, and GVTT. NADP(+) is bound by residues threonine 543, 610–611, 617–621, and aspartate 646; these read SR and KVYVQ. Residue lysine 666 forms a Glycyl lysine isopeptide (Lys-Gly) (interchain with G-Cter in ubiquitin) linkage. Position 691 (tryptophan 691) interacts with FAD.

This sequence belongs to the NADPH--cytochrome P450 reductase family. The protein in the N-terminal section; belongs to the flavodoxin family. In the C-terminal section; belongs to the flavoprotein pyridine nucleotide cytochrome reductase family. Interacts with PCL1. The cofactor is FAD. FMN is required as a cofactor. In terms of processing, phosphorylated by the cyclin-CDK PCL1-PHO85.

Its subcellular location is the endoplasmic reticulum membrane. The protein resides in the mitochondrion outer membrane. The protein localises to the cell membrane. The enzyme catalyses 2 oxidized [cytochrome P450] + NADPH = 2 reduced [cytochrome P450] + NADP(+) + H(+). Its function is as follows. This enzyme is required for electron transfer from NADP to cytochrome P450 in microsomes. It can also provide electron transfer to heme oxygenase and cytochrome B5. Involved in ergosterol biosynthesis. Has NADPH-dependent ferrireductase activity on the plasma membrane. In Saccharomyces cerevisiae (strain ATCC 204508 / S288c) (Baker's yeast), this protein is NADPH--cytochrome P450 reductase.